Here is a 226-residue protein sequence, read N- to C-terminus: Cytidylate kinase (226 aa).

Residue 12–20 participates in ATP binding; that stretch reads GPSGAGKGT.

The protein belongs to the cytidylate kinase family. Type 1 subfamily.

Its subcellular location is the cytoplasm. It carries out the reaction CMP + ATP = CDP + ADP. The catalysed reaction is dCMP + ATP = dCDP + ADP. In Vibrio parahaemolyticus serotype O3:K6 (strain RIMD 2210633), this protein is Cytidylate kinase.